The following is a 596-amino-acid chain: Protein Malvolio (596 aa).

Residues 1–34 are disordered; it reads MSSNEAYHEPGAGGDGPGGSSGASGGGSQRSNQL. The span at 11–28 shows a compositional bias: gly residues; it reads GAGGDGPGGSSGASGGGS. A glycan (N-linked (GlcNAc...) asparagine) is linked at N41. 7 helical membrane-spanning segments follow: residues 77–97, 105–125, 154–174, 186–206, 216–236, 263–283, and 309–329; these read LWAFTGPGFLMSIAYLDPGNI, AAAKYKILWVLLWATVLGLLM, WILWIMIEIAIIGSDMQEVIG, VVPLWGGVLITIVDTFTFLFL, FLFGTLITIMAVSFGYEYIVS, AVGVVGAVIMPHNLYLHSALV, and VALFVSFIINLFVVAVFAHGM. An N-linked (GlcNAc...) asparagine glycan is attached at N359. A run of 5 helical transmembrane segments spans residues 373–393, 424–444, 463–483, 490–510, and 520–540; these read LFLGCTFGAVAMYIWGVGILA, VLVTRCIAIIPTFCLAMFSKM, PFAAIPTIAFTSCAAIMGEFV, IVSILLTIVVIGVNLYFVVVQ, and LLALVCIFAILYILFNLYLVI. A glycan (N-linked (GlcNAc...) asparagine) is linked at N574.

This sequence belongs to the NRAMP family. As to expression, expressed in macrophages and in the nervous system.

The protein resides in the membrane. Functionally, putative transporter required for normal taste behavior. May be a nitrite/nitrate transporter. In Drosophila melanogaster (Fruit fly), this protein is Protein Malvolio (Mvl).